Consider the following 172-residue polypeptide: Ubiquitin-conjugating enzyme E2 PEX4 (172 aa).

Positions 14–167 (SASKRLIKEL…VELWCQDSDS (154 aa)) constitute a UBC core domain. The active-site Glycyl thioester intermediate is C104.

Belongs to the ubiquitin-conjugating enzyme family.

It catalyses the reaction S-ubiquitinyl-[E1 ubiquitin-activating enzyme]-L-cysteine + [E2 ubiquitin-conjugating enzyme]-L-cysteine = [E1 ubiquitin-activating enzyme]-L-cysteine + S-ubiquitinyl-[E2 ubiquitin-conjugating enzyme]-L-cysteine.. Its pathway is protein modification; protein ubiquitination. Ubiquitin-conjugating enzyme E2 that is essential for peroxisome biogenesis and plays a key role in development, pathogenicity, and cell wall integrity. Required for long and very long-chain fatty acid utilization and is involved in lipid droplet accumulation and the elimination of reactive oxygen species. Controls the expression of proteins involved in protein biosynthesis, fatty acid metabolism, cell wall synthesis, oxidation-reduction reactions, as well as of the enzymes involved in the biosynthesis of the mycotoxin deoxynivalenol (DON), including TRI5, TRI6, and TRI10. The chain is Ubiquitin-conjugating enzyme E2 PEX4 from Gibberella zeae (strain ATCC MYA-4620 / CBS 123657 / FGSC 9075 / NRRL 31084 / PH-1) (Wheat head blight fungus).